Consider the following 62-residue polypeptide: Large ribosomal subunit protein bL28 (62 aa).

The protein belongs to the bacterial ribosomal protein bL28 family.

This Streptococcus equi subsp. equi (strain 4047) protein is Large ribosomal subunit protein bL28.